The sequence spans 439 residues: Serine/threonine-protein kinase 2 (439 aa).

The Protein kinase domain maps to 87 to 439 (NDDFYHISTG…IFSDWINGGN (353 aa)). ATP-binding positions include 93 to 101 (ISTGGYGIV) and Lys-117. Asp-307 functions as the Proton acceptor in the catalytic mechanism.

The protein belongs to the protein kinase superfamily. Ser/Thr protein kinase family. In terms of processing, phosphorylated in vivo. Autophosphorylated in vitro.

The protein localises to the host endoplasmic reticulum. It is found in the host endoplasmic reticulum-Golgi intermediate compartment. The catalysed reaction is L-seryl-[protein] + ATP = O-phospho-L-seryl-[protein] + ADP + H(+). The enzyme catalyses L-threonyl-[protein] + ATP = O-phospho-L-threonyl-[protein] + ADP + H(+). Essential serine-protein kinase involved in the early stage of virion morphogenesis. The chain is Serine/threonine-protein kinase 2 (OPG054) from Vaccinia virus (strain Tian Tan) (VACV).